Here is a 362-residue protein sequence, read N- to C-terminus: Methionine import ATP-binding protein MetN (362 aa).

The 236-residue stretch at 23-258 (VRLTDVKRRF…PQAEITGSLL (236 aa)) folds into the ABC transporter domain. Residue 55–62 (GRSGAGKS) participates in ATP binding.

This sequence belongs to the ABC transporter superfamily. Methionine importer (TC 3.A.1.24) family. As to quaternary structure, the complex is composed of two ATP-binding proteins (MetN), two transmembrane proteins (MetI) and a solute-binding protein (MetQ).

The protein resides in the cell inner membrane. The enzyme catalyses L-methionine(out) + ATP + H2O = L-methionine(in) + ADP + phosphate + H(+). The catalysed reaction is D-methionine(out) + ATP + H2O = D-methionine(in) + ADP + phosphate + H(+). In terms of biological role, part of the ABC transporter complex MetNIQ involved in methionine import. Responsible for energy coupling to the transport system. This Rhizobium johnstonii (strain DSM 114642 / LMG 32736 / 3841) (Rhizobium leguminosarum bv. viciae) protein is Methionine import ATP-binding protein MetN.